The following is a 313-amino-acid chain: Transcription factor MafB (313 aa).

Disordered stretches follow at residues 51–77 (QPTGSVSSTPISTPCSSVPSSPSFSPT) and 151–197 (MGLP…VEDR). A compositionally biased stretch (low complexity) spans 55 to 76 (SVSSTPISTPCSSVPSSPSFSP). A compositionally biased stretch (basic residues) spans 154 to 166 (PHHHPHHHQHQHH). Residues 167 to 192 (QTSPSPSGSSSSSQQLHHQQQHSSSS) are compositionally biased toward low complexity. The tract at residues 225 to 250 (RLKQKRRTLKNRGYAQSCRYKRVQQK) is basic motif. The region spanning 225-288 (RLKQKRRTLK…DAYKIKCEKL (64 aa)) is the bZIP domain. The leucine-zipper stretch occupies residues 253-274 (LEGEKTQLVQQVEQLKQEVSRL). A disordered region spans residues 292–313 (NSSNFREAGSTSDNPSSPEFFM).

It belongs to the bZIP family. Maf subfamily. As to quaternary structure, homodimer or heterodimer with other bHLH-Zip transcription factors. Binds DNA as a homodimer or a heterodimer.

It is found in the nucleus. Functionally, acts as a transcriptional activator or repressor. Implicated in the regulation of cell-type specific gene expression and play a role in inductive events during lens development. The polypeptide is Transcription factor MafB (mafb) (Xenopus laevis (African clawed frog)).